We begin with the raw amino-acid sequence, 136 residues long: Probable acyltransferase SID5 (136 aa).

Its pathway is siderophore biosynthesis. Probable acyltransferase; part of the gene cluster that mediates the biosynthesis of hydroxamate-containing siderophores that play a critical role in virulence via intracellular iron acquisition during macrophage infection. The sequence is that of Probable acyltransferase SID5 from Ajellomyces capsulatus (Darling's disease fungus).